The sequence spans 546 residues: Amidase FG08078 (546 aa).

Residues K129 and S204 each act as charge relay system in the active site. The Acyl-ester intermediate role is filled by S228.

Belongs to the amidase family.

It participates in mycotoxin biosynthesis. Amidase; part of the gene cluster that mediates the biosynthesis of butenolide, a mycotoxin that shows antibiotic activity but does not seem to play a major role in the spread of head blight in wheat. Butenolide is derived from glutamic acid via a 4-acetamido-2-butenoic acid intermediate. The predicted function of the NADH:flavin oxidoreductase FG08077, the cytochrome P450 monooxygenase FG08079, the decarboxylase FG08083, and the putative acetyltransferase FG08082 are consistent with this pathway, however, the respective activities of the butelonide biosynthesis cluster enzymes have still to be experimentally determined. This Gibberella zeae (strain ATCC MYA-4620 / CBS 123657 / FGSC 9075 / NRRL 31084 / PH-1) (Wheat head blight fungus) protein is Amidase FG08078.